We begin with the raw amino-acid sequence, 213 residues long: Orotate phosphoribosyltransferase (213 aa).

Position 26 (Lys26) interacts with 5-phospho-alpha-D-ribose 1-diphosphate. 34–35 (FF) is a binding site for orotate. Residues 72-73 (YK), Arg99, Lys100, Lys103, His105, and 124-132 (DDVITAGTA) each bind 5-phospho-alpha-D-ribose 1-diphosphate. Orotate is bound by residues Thr128 and Arg156.

Belongs to the purine/pyrimidine phosphoribosyltransferase family. PyrE subfamily. As to quaternary structure, homodimer. Requires Mg(2+) as cofactor.

The enzyme catalyses orotidine 5'-phosphate + diphosphate = orotate + 5-phospho-alpha-D-ribose 1-diphosphate. The protein operates within pyrimidine metabolism; UMP biosynthesis via de novo pathway; UMP from orotate: step 1/2. Its function is as follows. Catalyzes the transfer of a ribosyl phosphate group from 5-phosphoribose 1-diphosphate to orotate, leading to the formation of orotidine monophosphate (OMP). The protein is Orotate phosphoribosyltransferase of Pectobacterium carotovorum subsp. carotovorum (strain PC1).